The chain runs to 203 residues: Histidine biosynthesis bifunctional protein HisIE (203 aa).

The phosphoribosyl-AMP cyclohydrolase stretch occupies residues 1–114 (MLTEQQRREL…FGDASHQWLF (114 aa)). The tract at residues 115-203 (LYQLEQLLAE…VIDNLRKRHQ (89 aa)) is phosphoribosyl-ATP pyrophosphohydrolase.

In the N-terminal section; belongs to the PRA-CH family. It in the C-terminal section; belongs to the PRA-PH family.

The protein localises to the cytoplasm. The catalysed reaction is 1-(5-phospho-beta-D-ribosyl)-ATP + H2O = 1-(5-phospho-beta-D-ribosyl)-5'-AMP + diphosphate + H(+). The enzyme catalyses 1-(5-phospho-beta-D-ribosyl)-5'-AMP + H2O = 1-(5-phospho-beta-D-ribosyl)-5-[(5-phospho-beta-D-ribosylamino)methylideneamino]imidazole-4-carboxamide. It participates in amino-acid biosynthesis; L-histidine biosynthesis; L-histidine from 5-phospho-alpha-D-ribose 1-diphosphate: step 2/9. The protein operates within amino-acid biosynthesis; L-histidine biosynthesis; L-histidine from 5-phospho-alpha-D-ribose 1-diphosphate: step 3/9. This chain is Histidine biosynthesis bifunctional protein HisIE (hisI), found in Salmonella typhimurium (strain LT2 / SGSC1412 / ATCC 700720).